The following is a 120-amino-acid chain: Acylphosphatase-1 (120 aa).

Alanine 2 is subject to N-acetylalanine. The Acylphosphatase-like domain maps to 8-98 (SCEFEVFGRV…YGYANFHIKP (91 aa)). Catalysis depends on residues arginine 23 and asparagine 41. Residues 91–120 (YANFHIKPDPHENRPVHEGLGSSSSHHDSN) are disordered. Residues 96-107 (IKPDPHENRPVH) are compositionally biased toward basic and acidic residues.

It belongs to the acylphosphatase family.

Its subcellular location is the cytoplasm. It carries out the reaction an acyl phosphate + H2O = a carboxylate + phosphate + H(+). The chain is Acylphosphatase-1 (Acyp) from Drosophila melanogaster (Fruit fly).